The chain runs to 314 residues: Phospholipid phosphatase-related protein type 5 (314 aa).

Transmembrane regions (helical) follow at residues 5–25 (FSLT…VMLA), 61–81 (IPPV…IIVG), 120–140 (FLGI…AGQV), 194–214 (AALS…TIKA), 223–243 (VLCL…VAEY), and 250–270 (VIAG…CVVN).

The protein belongs to the PA-phosphatase related phosphoesterase family.

It localises to the cell membrane. Its function is as follows. Induces filopodia formation and promotes neurite growth. The sequence is that of Phospholipid phosphatase-related protein type 5 from Xenopus laevis (African clawed frog).